Reading from the N-terminus, the 343-residue chain is Ribosomal RNA small subunit methyltransferase C (343 aa).

This sequence belongs to the methyltransferase superfamily. RsmC family. In terms of assembly, monomer.

The protein resides in the cytoplasm. It carries out the reaction guanosine(1207) in 16S rRNA + S-adenosyl-L-methionine = N(2)-methylguanosine(1207) in 16S rRNA + S-adenosyl-L-homocysteine + H(+). Specifically methylates the guanine in position 1207 of 16S rRNA in the 30S particle. The polypeptide is Ribosomal RNA small subunit methyltransferase C (Escherichia coli O157:H7).